We begin with the raw amino-acid sequence, 239 residues long: MKVTLFVTCLVDMFETNVGKATVEVLERLGCEIEFPEAQVCCGQPAYNSGHVESAKEAMKHMIETFEDAEYIVTPSGSCATMFHEYPHVFKDDPKWAARAQKVADKTYELTQFIVDVLKVTDVGASLKGTATMHKSCHMTRMLGVKEAPGILLSNVKGLTVKELPNVQNCCGFGGTFSVKMTPISEQMVDEKVDSVMETGADYLIGADCGCLLNIGGRIERLGKKVRVMHIAEVLNSRS.

Belongs to the LutA/YkgE family.

Functionally, is involved in L-lactate degradation and allows cells to grow with lactate as the sole carbon source. The sequence is that of Lactate utilization protein A from Bacillus cytotoxicus (strain DSM 22905 / CIP 110041 / 391-98 / NVH 391-98).